We begin with the raw amino-acid sequence, 204 residues long: ATP synthase subunit b 2 (204 aa).

The disordered stretch occupies residues alanine 8–histidine 28. A helical membrane pass occupies residues leucine 56–proline 76.

This sequence belongs to the ATPase B chain family. As to quaternary structure, F-type ATPases have 2 components, F(1) - the catalytic core - and F(0) - the membrane proton channel. F(1) has five subunits: alpha(3), beta(3), gamma(1), delta(1), epsilon(1). F(0) has three main subunits: a(1), b(2) and c(10-14). The alpha and beta chains form an alternating ring which encloses part of the gamma chain. F(1) is attached to F(0) by a central stalk formed by the gamma and epsilon chains, while a peripheral stalk is formed by the delta and b chains.

The protein resides in the cell inner membrane. F(1)F(0) ATP synthase produces ATP from ADP in the presence of a proton or sodium gradient. F-type ATPases consist of two structural domains, F(1) containing the extramembraneous catalytic core and F(0) containing the membrane proton channel, linked together by a central stalk and a peripheral stalk. During catalysis, ATP synthesis in the catalytic domain of F(1) is coupled via a rotary mechanism of the central stalk subunits to proton translocation. Functionally, component of the F(0) channel, it forms part of the peripheral stalk, linking F(1) to F(0). The b'-subunit is a diverged and duplicated form of b found in plants and photosynthetic bacteria. The polypeptide is ATP synthase subunit b 2 (atpF2) (Rhizobium meliloti (strain 1021) (Ensifer meliloti)).